A 231-amino-acid polypeptide reads, in one-letter code: Acyl-protein thioesterase 2 (231 aa).

The S-palmitoyl cysteine moiety is linked to residue cysteine 2. A Phosphoserine modification is found at serine 82. Residues serine 122, aspartate 176, and histidine 210 each act as charge relay system in the active site.

The protein belongs to the AB hydrolase superfamily. AB hydrolase 2 family. In terms of tissue distribution, expressed in various breast cancer cell lines.

It is found in the cytoplasm. The enzyme catalyses S-hexadecanoyl-L-cysteinyl-[protein] + H2O = L-cysteinyl-[protein] + hexadecanoate + H(+). The catalysed reaction is prostaglandin E2 1-glyceryl ester + H2O = prostaglandin E2 + glycerol + H(+). It carries out the reaction 1-hexadecanoyl-sn-glycero-3-phosphocholine + H2O = sn-glycerol 3-phosphocholine + hexadecanoate + H(+). It catalyses the reaction 1-octadecanoyl-sn-glycero-3-phosphocholine + H2O = octadecanoate + sn-glycerol 3-phosphocholine + H(+). The enzyme catalyses 1-hexadecanoyl-sn-glycero-3-phosphate + H2O = sn-glycerol 3-phosphate + hexadecanoate + H(+). The catalysed reaction is 1-hexadecanoyl-sn-glycero-3-phospho-L-serine + H2O = sn-glycero-3-phospho-L-serine + hexadecanoate + H(+). Inhibited by compound 1 or (5,5-Dioxido-4H-thieno[3,2-c]thiochromen-2-yl)(4-(4-methoxyphenyl)piperazin-1-yl)methanone. Its function is as follows. Acts as an acyl-protein thioesterase hydrolyzing fatty acids from S-acylated cysteine residues in proteins such as trimeric G alpha proteins, GSDMD, GAP43, ZDHHC6 or HRAS. Deacylates GAP43. Mediates depalmitoylation of ZDHHC6. Has lysophospholipase activity. Hydrolyzes prostaglandin glycerol esters (PG-Gs) in the following order prostaglandin D2-glycerol ester (PGD2-G) &gt; prostaglandin E2 glycerol ester (PGE2-G) &gt; prostaglandin F2-alpha-glycerol ester (PGF2-alpha-G). Hydrolyzes 1-arachidonoylglycerol but not 2-arachidonoylglycerol or arachidonoylethanolamide. The polypeptide is Acyl-protein thioesterase 2 (LYPLA2) (Homo sapiens (Human)).